The primary structure comprises 278 residues: HAUS augmin-like complex subunit 1 (278 aa).

Coiled coils occupy residues 49 to 79, 124 to 177, and 249 to 277; these read RDVYLVIEDLKQKASEYESEAKYLQDLLMES, SDLF…KVDN, and SLAQVKIEEAKRELDSIEAELTRRVDMME.

This sequence belongs to the HAUS1 family. In terms of assembly, component of the HAUS augmin-like complex. The complex interacts with the gamma-tubulin ring complex and this interaction is required for spindle assembly. Associates with microtubules. The interaction with microtubules is strong during mitosis, while it is weak or absent during interphase. It is unclear whether this interaction is direct or indirect. Interacts with EML3 (phosphorylated at 'Thr-881'). Widely expressed. Expressed in pancreas, kidney, skeletal muscle, liver and heart. Weakly expressed in lung, brain and placenta.

The protein localises to the cytoplasm. It is found in the cytoskeleton. It localises to the microtubule organizing center. Its subcellular location is the centrosome. The protein resides in the spindle. The protein localises to the spindle pole. Contributes to mitotic spindle assembly, maintenance of centrosome integrity and completion of cytokinesis as part of the HAUS augmin-like complex. The sequence is that of HAUS augmin-like complex subunit 1 (HAUS1) from Homo sapiens (Human).